The chain runs to 231 residues: Elongation factor 1-delta 1 (231 aa).

N-acetylalanine is present on Ala2. The 64-residue stretch at Asp10–Gly73 folds into the GST C-terminal domain. 2 disordered regions span residues Thr85–Asp108 and Glu116–Thr135. A compositionally biased stretch (basic and acidic residues) spans Glu119–Ala129.

Belongs to the EF-1-beta/EF-1-delta family. As to quaternary structure, EF-1 is composed of 4 subunits: alpha, beta (1B-alpha=beta'), delta (1B-beta), and gamma (1B-gamma).

Its function is as follows. EF-1-beta and EF-1-delta stimulate the exchange of GDP bound to EF-1-alpha to GTP. This chain is Elongation factor 1-delta 1, found in Arabidopsis thaliana (Mouse-ear cress).